A 407-amino-acid polypeptide reads, in one-letter code: Methylthioribose-1-phosphate isomerase (407 aa).

The Proton donor role is filled by Asp-275.

This sequence belongs to the eIF-2B alpha/beta/delta subunits family. MtnA subfamily.

It is found in the cytoplasm. The protein localises to the nucleus. It catalyses the reaction 5-(methylsulfanyl)-alpha-D-ribose 1-phosphate = 5-(methylsulfanyl)-D-ribulose 1-phosphate. The protein operates within amino-acid biosynthesis; L-methionine biosynthesis via salvage pathway; L-methionine from S-methyl-5-thio-alpha-D-ribose 1-phosphate: step 1/6. In terms of biological role, catalyzes the interconversion of methylthioribose-1-phosphate (MTR-1-P) into methylthioribulose-1-phosphate (MTRu-1-P). This Kluyveromyces lactis (strain ATCC 8585 / CBS 2359 / DSM 70799 / NBRC 1267 / NRRL Y-1140 / WM37) (Yeast) protein is Methylthioribose-1-phosphate isomerase.